The chain runs to 305 residues: N-acetyl-D-glucosamine kinase (305 aa).

ATP-binding positions include 4 to 11 (GFDIGGTK) and 133 to 140 (GFGGGLVF). His-157, Cys-178, Cys-180, and Cys-185 together coordinate Zn(2+).

This sequence belongs to the ROK (NagC/XylR) family. NagK subfamily.

The enzyme catalyses N-acetyl-D-glucosamine + ATP = N-acetyl-D-glucosamine 6-phosphate + ADP + H(+). It functions in the pathway cell wall biogenesis; peptidoglycan recycling. Functionally, catalyzes the phosphorylation of N-acetyl-D-glucosamine (GlcNAc) derived from cell-wall degradation, yielding GlcNAc-6-P. The chain is N-acetyl-D-glucosamine kinase from Histophilus somni (strain 129Pt) (Haemophilus somnus).